The following is a 532-amino-acid chain: Nucleobase-ascorbate transporter 6 (532 aa).

The interval 1–24 is disordered; the sequence is MAGGGAPAPKADEPQPHPPKDQLP. The segment covering 10 to 20 has biased composition (basic and acidic residues); the sequence is KADEPQPHPPK. A run of 12 helical transmembrane segments spans residues 39–59, 75–95, 97–117, 137–157, 163–185, 192–212, 223–243, 289–309, 361–381, 392–414, 426–446, and 463–483; these read AILLGFQHYLVMLGTTVLIPT, VIQTILFVAGINTLLQTLFGT, LPAVVGASYTFVPTTISIILS, TQGALIVASTLQMILGFSGLW, FLSPISAVPLVGLVGFGLYEFGF, IEIGLPELLILVFVSQYLPHV, FAVIFAVVIVWIYAHLLTVGG, FAMMMASFVALVESTGAFVAV, VGSRRVVQIAAGFMIFFSILG, APIIAALYCLFFAYVGAGGLSFL, FILGFSVFLGLSIPQYFNEYT, and DMVNVPFSSEPFVAGSVAFFL.

Belongs to the nucleobase:cation symporter-2 (NCS2) (TC 2.A.40) family. As to expression, expressed in the apical region of cotyledons 4 days after imbibition (DAI). Expressed in the whole vasculature at 12 DAI. Expressed in the root central cylinder and lateral root primordia. Expressed in the vasculature of sepals, filaments, carpels and developing siliques.

Its subcellular location is the membrane. The chain is Nucleobase-ascorbate transporter 6 (NAT6) from Arabidopsis thaliana (Mouse-ear cress).